Consider the following 284-residue polypeptide: uncharacterized protein (284 aa).

2 stretches are compositionally biased toward low complexity: residues 110 to 123 (NGPRGRQMNGPNNG) and 130 to 149 (NGPMNGPNNNQFNGPMNGPN). Positions 110 to 176 (NGPRGRQMNG…PNEFDSDDDD (67 aa)) are disordered.

It is found in the virion. This is an uncharacterized protein from Acanthamoeba polyphaga mimivirus (APMV).